We begin with the raw amino-acid sequence, 1490 residues long: DNA-directed RNA polymerase subunit beta' (1490 aa).

Residues cysteine 67, cysteine 69, cysteine 82, and cysteine 85 each coordinate Zn(2+). Residues aspartate 499, aspartate 501, and aspartate 503 each contribute to the Mg(2+) site. Zn(2+)-binding residues include cysteine 868, cysteine 944, cysteine 951, and cysteine 954.

The protein belongs to the RNA polymerase beta' chain family. In terms of assembly, the RNAP catalytic core consists of 2 alpha, 1 beta, 1 beta' and 1 omega subunit. When a sigma factor is associated with the core the holoenzyme is formed, which can initiate transcription. The cofactor is Mg(2+). Zn(2+) serves as cofactor.

It carries out the reaction RNA(n) + a ribonucleoside 5'-triphosphate = RNA(n+1) + diphosphate. In terms of biological role, DNA-dependent RNA polymerase catalyzes the transcription of DNA into RNA using the four ribonucleoside triphosphates as substrates. The sequence is that of DNA-directed RNA polymerase subunit beta' from Chlorobaculum tepidum (strain ATCC 49652 / DSM 12025 / NBRC 103806 / TLS) (Chlorobium tepidum).